The primary structure comprises 1022 residues: Polyamine-modulated factor 1-binding protein 1 (1022 aa).

5 coiled-coil regions span residues 89-121 (NKQY…LQAS), 169-281 (EKLH…ACSN), 312-377 (SEDC…LREE), 411-732 (LKKD…SAIQ), and 758-968 (QDDL…KAGN). Basic and acidic residues-rich tracts occupy residues 545 to 556 (QKESSKIEEERK) and 571 to 582 (EGQRRLSNAEKE). Residues 545–582 (QKESSKIEEERKHNRQRLQELSSELSEGQRRLSNAEKE) form a disordered region.

In terms of tissue distribution, expressed in the testis.

It is found in the cell projection. The protein resides in the cilium. The protein localises to the flagellum. Its function is as follows. Required for normal spermatogenesis. It functions as a scaffold protein that attaches the sperm head-tail connecting piece to the nuclear envelope, thus maintaining sperm head and tail integrity. May also be involved in the general organization of cellular cytoskeleton. The polypeptide is Polyamine-modulated factor 1-binding protein 1 (Pmfbp1) (Mus musculus (Mouse)).